An 813-amino-acid polypeptide reads, in one-letter code: Cadherin-22 (813 aa).

Residues Met1–Ala33 form the signal peptide. The Extracellular portion of the chain corresponds to Ala34–Pro621. 5 Cadherin domains span residues Trp61–Phe165, Leu166–Phe274, Pro275–Phe391, Arg392–Glu495, and Leu496–Phe613. Asn159 carries an N-linked (GlcNAc...) asparagine glycan. Asn463 and Asn609 each carry an N-linked (GlcNAc...) asparagine glycan. Residues Gly622–Leu642 traverse the membrane as a helical segment. At Thr643–Ser813 the chain is on the cytoplasmic side. A disordered region spans residues Gly696–Glu726.

In terms of tissue distribution, strongly expressed in the pituitary gland and the brain (in the inner granular and glomerular layers of the olfactory bulb, anterior olfactory nucleus, primary olfactory cortex, Purkinje cell layer of cerebellum, and pineal gland). Low expression in lung and heart. No expression in submandibular gland, thymus, liver, spleen, adrenal, and kidney.

The protein resides in the cell membrane. Functionally, cadherins are calcium-dependent cell adhesion proteins. They preferentially interact with themselves in a homophilic manner in connecting cells; cadherins may thus contribute to the sorting of heterogeneous cell types. PB-cadherins may have a role in the morphological organization of pituitary gland and brain tissues. This chain is Cadherin-22 (Cdh22), found in Rattus norvegicus (Rat).